Consider the following 60-residue polypeptide: MHYIDWVILLTFAAALIVCLTPKPEPCIITVSGASATVSNCPNPELLTDLVKALKPAKPV.

Topologically, residues 1–6 are lumenal; it reads MHYIDW. Residues 7-23 form a helical membrane-spanning segment; that stretch reads VILLTFAAALIVCLTPK. The Cytoplasmic portion of the chain corresponds to 24–60; it reads PEPCIITVSGASATVSNCPNPELLTDLVKALKPAKPV.

This sequence belongs to the Tymovirales TGBp3 protein family.

It is found in the host endoplasmic reticulum membrane. Plays a role in viral cell-to-cell propagation, by facilitating genome transport to neighboring plant cells through plasmosdesmata. May induce the formation of granular vesicles derived from the Endoplasmic reticulum, which align on actin filaments. The chain is Movement protein TGBp3 from Citrus (ICRSV).